The primary structure comprises 1225 residues: MAQTNGEMEHSKESPEQITNGNNQEVVQEDDGAGGLFQISVKLPHEPYKIQVMVSSQEQVQDVRQSIVELPGTFQYTCFHLEFNGKRINDFVELSEVPGLQADSEIVLVEDPYTEKDARMHVVRLRELLGAAGDRVDTINGVNAGLSLHDSIAAEAGSEKSEKEHSLAKYDIPGSSSLKTILPRSEAPAPKTVKSISLSPWNPPPHHLRQKGHLLYLQVTTNEGEQFQITSHVSGFFVNKCSNSRFDPFPKTIPKKGSAHSLLNLISQLSPSFDAAFKELQESNNQKDLLTTFPFQNSIPSSPWLVAPPASNSLQTTKELPRETVQDRVFRERLTSKLFADYNEAAARGAVLVARGEVAPLNPTEAQDAQIFVYNNIFYSFGADGVGTFASEGGDEAARVAVGKDVLGIKAVNQLDINGLFTPGTIVVDYMGKRIVGQSIVPGIFKQREPGEHQIDYGGVEGKDVVATHPDFVPVFEKLSKALRIKKHPVWDKDNQRHDLEGSVETKGLLGTDGRKYVLDLYRVTPLDVAWNEEEDGDAYPHRMSVLRLELVESYWRAKMSQYVKAEVERRRAAKAEEAAKKEKSSEDTESKEEGSEEKSEEALDQERVDISGFSLALNPDVFSGQIPQTDEEKEQWAQDEKEVRDACDFLRSKVMPELIQDLHDGDVGFPMDGQSLSQLLHKRGINIRYLGKLATLAKEKGSRLEALSTLLVQEMVVRAFKHITNKYLRNVPAPFAASCVAHLLNCLLGADVNATPRAEIDSSLREIYPEGDFSFEKVTPEALRAEIEKQVTLRYRFNLESQWFNSLRHLQLLRDIAIKLGLQLAARDFVFTKAQAEGLKVLPVANGVNGTGQDEGSKKKKKNKNGDSGSPARSAAAEKPIVTFTPDDIVNIVPLVKDASPRSSLAEEALEAGRISLMQNQKQLGQELILESLSLHEQIYGILHPEVAKLYHQLSMLYYQTDEKDAAVELARKAVIVTERTLGVDSADTILSYLNLSLFEHASGNTKVALAYIKHAMDLWKIIFGSNHPDSITTMNNAAVMLQHLKQYSDSRKWFEASLSVCESLFGKQSINTATILFQLAQALALDQDSKAAVGKMRDAYNIFLSQLGPEDRNTKEAETWLEQLTQNAVSIAKHAKDIQARRLRRINMGTRTTLGTQIQPQVGQSTADVSAPSQASNSSIDSRNIDELLKFIEGGDTSSSRTKQKKRAAASNPKLRGSKKSSA.

A disordered region spans residues 1–22 (MAQTNGEMEHSKESPEQITNGN). The 252-residue stretch at 281-532 (QESNNQKDLL…RVTPLDVAWN (252 aa)) folds into the Clu domain. Disordered regions lie at residues 577–605 (EEAA…EALD) and 846–878 (ANGV…SAAA). TPR repeat units lie at residues 949–982 (AKLY…TERT), 991–1024 (ILSY…WKII), and 1033–1066 (ITTM…CESL). Over residues 1153 to 1184 (RTTLGTQIQPQVGQSTADVSAPSQASNSSIDS) the composition is skewed to polar residues. Residues 1153-1225 (RTTLGTQIQP…KLRGSKKSSA (73 aa)) form a disordered region.

The protein belongs to the CLU family. In terms of assembly, may associate with the eukaryotic translation initiation factor 3 (eIF-3) complex.

It is found in the cytoplasm. Functionally, mRNA-binding protein involved in proper cytoplasmic distribution of mitochondria. This Emericella nidulans (strain FGSC A4 / ATCC 38163 / CBS 112.46 / NRRL 194 / M139) (Aspergillus nidulans) protein is Clustered mitochondria protein homolog.